A 261-amino-acid polypeptide reads, in one-letter code: Ribosomal RNA large subunit methyltransferase E (261 aa).

G81, W83, D104, D120, and D144 together coordinate S-adenosyl-L-methionine. Catalysis depends on K184, which acts as the Proton acceptor. The disordered stretch occupies residues 233 to 261; that stretch reads GNALGHEVEDDGPMPHDPREDATADEDQD. Positions 245–254 are enriched in basic and acidic residues; the sequence is PMPHDPREDA.

This sequence belongs to the class I-like SAM-binding methyltransferase superfamily. RNA methyltransferase RlmE family.

Its subcellular location is the cytoplasm. The catalysed reaction is uridine(2552) in 23S rRNA + S-adenosyl-L-methionine = 2'-O-methyluridine(2552) in 23S rRNA + S-adenosyl-L-homocysteine + H(+). Its function is as follows. Specifically methylates the uridine in position 2552 of 23S rRNA at the 2'-O position of the ribose in the fully assembled 50S ribosomal subunit. The protein is Ribosomal RNA large subunit methyltransferase E of Allorhizobium ampelinum (strain ATCC BAA-846 / DSM 112012 / S4) (Agrobacterium vitis (strain S4)).